The primary structure comprises 297 residues: Homoserine kinase (297 aa).

Residue 79 to 89 (PIARGLGSSGA) coordinates ATP.

It belongs to the GHMP kinase family. Homoserine kinase subfamily.

The protein resides in the cytoplasm. It carries out the reaction L-homoserine + ATP = O-phospho-L-homoserine + ADP + H(+). It functions in the pathway amino-acid biosynthesis; L-threonine biosynthesis; L-threonine from L-aspartate: step 4/5. Functionally, catalyzes the ATP-dependent phosphorylation of L-homoserine to L-homoserine phosphate. This is Homoserine kinase from Pyrobaculum neutrophilum (strain DSM 2338 / JCM 9278 / NBRC 100436 / V24Sta) (Thermoproteus neutrophilus).